A 503-amino-acid polypeptide reads, in one-letter code: Protein ERGIC-53-like (503 aa).

The N-terminal stretch at 1–25 (MLKTGGLSPSLCLLSLLLALHSAER) is a signal peptide. Residues 26-439 (SYPPPQRRFE…WLPGFSTCLR (414 aa)) lie on the Lumenal side of the membrane. In terms of domain architecture, L-type lectin-like spans 32–253 (RRFEYKLSFK…DVLSFLTFSL (222 aa)). Cysteines 177 and 216 form a disulfide. A helical membrane pass occupies residues 440–460 (TSIFLFFLLIQTVGFFCYMNF). Residues 461-503 (RQELDKRLQEYLFTESISLQPALPIPRTIGVLRRQPVSPSMQA) are Cytoplasmic-facing.

Predominantly expressed in the sublingual salivary gland, in the mucous cells of the acini, but not in the serous cells, nor in the duct system (at protein level). Not detected in the submandilar, nor the parotid glands. Expressed in the mucous glands, but not detected in the serous glands (at protein level). Besides the salivary glands, expressed in the Brunner's glands in the duodenum, but no other mucous or serous glands (at protein level).

Its subcellular location is the endoplasmic reticulum-Golgi intermediate compartment membrane. The sequence is that of Protein ERGIC-53-like (Lman1l) from Rattus norvegicus (Rat).